The following is a 700-amino-acid chain: Calpain-2 catalytic subunit (700 aa).

Residue A2 is modified to N-acetylalanine. Residues A2 to G19 constitute a propeptide, anchors to the small subunit. Residues L45–T344 form the Calpain catalytic domain. Positions 89, 91, and 96 each coordinate Ca(2+). The active site involves C105. E175, Q229, and K230 together coordinate Ca(2+). Residues H262 and N286 contribute to the active site. Positions 292, 299, and 323 each coordinate Ca(2+). A domain III region spans residues P345 to D514. The linker stretch occupies residues E515–D529. Positions I530–L700 are domain IV. Ca(2+)-binding residues include A542, D545, E547, E552, D585, D587, S589, K591, E596, D615, D617, S619, T621, E626, D658, and N661. EF-hand domains follow at residues F572–Q605 and T602–K637. Positions V667–L700 constitute an EF-hand 3 domain.

The protein belongs to the peptidase C2 family. Forms a heterodimer with a small (regulatory) subunit (CAPNS1). Interacts with CPEB3; this leads to cleavage of CPEB3. Interacts with PIDD1 alternative open reading frame protein altPIDD1. It depends on Ca(2+) as a cofactor. In terms of tissue distribution, ubiquitous.

It is found in the cytoplasm. Its subcellular location is the cell membrane. The enzyme catalyses Broad endopeptidase specificity.. Activated by 200-1000 micromolar concentrations of calcium and inhibited by calpastatin. In terms of biological role, calcium-regulated non-lysosomal thiol-protease which catalyzes limited proteolysis of substrates involved in cytoskeletal remodeling and signal transduction. Proteolytically cleaves MYOC at 'Arg-226'. Proteolytically cleaves CPEB3 following neuronal stimulation which abolishes CPEB3 translational repressor activity, leading to translation of CPEB3 target mRNAs. The chain is Calpain-2 catalytic subunit (CAPN2) from Homo sapiens (Human).